The primary structure comprises 328 residues: Tetraacyldisaccharide 4'-kinase (328 aa).

55-62 (TAGGNGKT) provides a ligand contact to ATP.

The protein belongs to the LpxK family.

The catalysed reaction is a lipid A disaccharide + ATP = a lipid IVA + ADP + H(+). The protein operates within glycolipid biosynthesis; lipid IV(A) biosynthesis; lipid IV(A) from (3R)-3-hydroxytetradecanoyl-[acyl-carrier-protein] and UDP-N-acetyl-alpha-D-glucosamine: step 6/6. Its function is as follows. Transfers the gamma-phosphate of ATP to the 4'-position of a tetraacyldisaccharide 1-phosphate intermediate (termed DS-1-P) to form tetraacyldisaccharide 1,4'-bis-phosphate (lipid IVA). The sequence is that of Tetraacyldisaccharide 4'-kinase from Escherichia coli O17:K52:H18 (strain UMN026 / ExPEC).